The sequence spans 140 residues: T cell receptor alpha chain constant (140 aa).

Residues 19–107 enclose the Ig-like C1-type domain; the sequence is KSVCLFTDFD…LVEKSFETDT (89 aa). Cysteines 22 and 72 form a disulfide. N-linked (GlcNAc...) asparagine glycosylation is found at Asn-32, Asn-66, Asn-77, and Asn-113. The interval 94–115 is connecting peptide; the sequence is CDVKLVEKSFETDTNLNFQNLS. Residues 116–138 traverse the membrane as a helical segment; it reads VIGFRILLLKVAGFNLLMTLRLW. Over 139 to 140 the chain is Cytoplasmic; the sequence is SS.

Alpha-beta TR is a heterodimer composed of an alpha and beta chain; disulfide-linked. The alpha-beta TR is associated with the transmembrane signaling CD3 coreceptor proteins to form the TR-CD3 (TcR or TCR). The assembly of alpha-beta TR heterodimers with CD3 occurs in the endoplasmic reticulum where a single alpha-beta TR heterodimer associates with one CD3D-CD3E heterodimer, one CD3G-CD3E heterodimer and one CD247 homodimer forming a stable octameric structure. CD3D-CD3E and CD3G-CD3E heterodimers preferentially associate with TR alpha and TR beta chains, respectively. The association of the CD247 homodimer is the last step of TcR assembly in the endoplasmic reticulum and is required for transport to the cell surface.

It is found in the cell membrane. Its function is as follows. Constant region of T cell receptor (TR) alpha chain. Alpha-beta T cell receptors are antigen specific receptors which are essential to the immune response and are present on the cell surface of T lymphocytes. Recognize peptide-major histocompatibility (MH) (pMH) complexes that are displayed by antigen presenting cells (APC), a prerequisite for efficient T cell adaptive immunity against pathogens. Binding of alpha-beta TR to pMH complex initiates TR-CD3 clustering on the cell surface and intracellular activation of LCK that phosphorylates the ITAM motifs of CD3G, CD3D, CD3E and CD247 enabling the recruitment of ZAP70. In turn, ZAP70 phosphorylates LAT, which recruits numerous signaling molecules to form the LAT signalosome. The LAT signalosome propagates signal branching to three major signaling pathways, the calcium, the mitogen-activated protein kinase (MAPK) kinase and the nuclear factor NF-kappa-B (NF-kB) pathways, leading to the mobilization of transcription factors that are critical for gene expression and essential for T cell growth and differentiation. The T cell repertoire is generated in the thymus, by V-(D)-J rearrangement. This repertoire is then shaped by intrathymic selection events to generate a peripheral T cell pool of self-MH restricted, non-autoaggressive T cells. Post-thymic interaction of alpha-beta TR with the pMH complexes shapes TR structural and functional avidity. In Homo sapiens (Human), this protein is T cell receptor alpha chain constant.